The sequence spans 436 residues: UPF0597 protein YhaM (436 aa).

This sequence belongs to the UPF0597 family.

The protein is UPF0597 protein YhaM of Escherichia coli O6:H1 (strain CFT073 / ATCC 700928 / UPEC).